Reading from the N-terminus, the 545-residue chain is MLCFQCEQTHSGTGCVIRGVCTKTPEVAAIQDLMIFASAGLSYVAKKLPDSCEAERKEAASLVIQALFSTVTNVNFDADVLTKALYHLVDFRDALKAKLPEDVELPLAATLDFSRDRETLVKQGESYGIASRQKTLGIDVTGLQELLTYGMKGMAAYAHHAAVLDYRDPDVDNFLLEGMAALTDHSLDIQALLAVVMRCGEASYKTLALLDKANTSSFGHPVPTNVKMGPSKGKAILVSGHDLLDMKELLEQTKDTGIKVYTHGEMLPAHGYPELNKYPHLAGHYGGAWMLQRQEFINFPGPIVMTTNCLMEPRKEYAGRVFTRDLVGWPGLTHLPDRDFSKVIEAALESEGFTEDQESRSHIAGFGHHTVLDSADAVVSAIKKGDIKHFMLVGGCDGIKSGRHYFTDIAEKAPKDWVILTLGCGKFRVTDLDLGKIGDLPRLLDMGQCNDSYSAIRVALALAEAFDTDVNSLPLSLVLSWYEQKAVCVLLALLHLGVKGIRLGPTLPAFITPNMLKILVDNFDIKPIGNSAEEDLQEILAAKAA.

[4Fe-4S] cluster contacts are provided by cysteine 3, cysteine 6, cysteine 15, and cysteine 21. Hybrid [4Fe-2O-2S] cluster contacts are provided by histidine 241, glutamate 265, cysteine 309, cysteine 396, cysteine 424, cysteine 449, glutamate 483, and lysine 485. Cysteine 396 bears the Cysteine persulfide mark.

It belongs to the HCP family. [4Fe-4S] cluster serves as cofactor. Requires hybrid [4Fe-2O-2S] cluster as cofactor.

It localises to the cytoplasm. The catalysed reaction is A + NH4(+) + H2O = hydroxylamine + AH2 + H(+). Its function is as follows. Catalyzes the reduction of hydroxylamine to form NH(3) and H(2)O. The chain is Hydroxylamine reductase from Zymomonas mobilis subsp. mobilis (strain ATCC 31821 / ZM4 / CP4).